The sequence spans 357 residues: S-adenosylmethionine:tRNA ribosyltransferase-isomerase (357 aa).

The protein belongs to the QueA family. As to quaternary structure, monomer.

It is found in the cytoplasm. The enzyme catalyses 7-aminomethyl-7-carbaguanosine(34) in tRNA + S-adenosyl-L-methionine = epoxyqueuosine(34) in tRNA + adenine + L-methionine + 2 H(+). It functions in the pathway tRNA modification; tRNA-queuosine biosynthesis. Its function is as follows. Transfers and isomerizes the ribose moiety from AdoMet to the 7-aminomethyl group of 7-deazaguanine (preQ1-tRNA) to give epoxyqueuosine (oQ-tRNA). The polypeptide is S-adenosylmethionine:tRNA ribosyltransferase-isomerase (Edwardsiella ictaluri (strain 93-146)).